Reading from the N-terminus, the 150-residue chain is Bcl-2-interacting killer (150 aa).

The short motif at 51–65 (VALRLACIGDEMDLC) is the BH3 element. Residues 127–147 (PGQLFPMVLLVFLLLGGAWYL) traverse the membrane as a helical segment. Positions 127 to 148 (PGQLFPMVLLVFLLLGGAWYLQ) are leucine-zipper.

As to quaternary structure, interacts with RHBDL4/RHBDD1. Interacts with BCL2L10/BCL-B. Post-translationally, proteolytically cleaved by RHBDL4/RHBDD1. RHBDL4/RHBDD1-induced cleavage is a necessary step prior its degradation by the proteosome-dependent mechanism. In terms of processing, ubiquitinated by the ECS(ASB11) complex in response to endoplasmic reticulum stress, leading to substrate recognition by the segregase p97/VCP and degradation by the proteasome. As to expression, expressed in testis, kidney, liver, lung and heart.

The protein resides in the endomembrane system. It is found in the mitochondrion membrane. In terms of biological role, accelerates programmed cell death. Binding to the apoptosis repressors Bcl-X(L), BHRF1 or Bcl-2 suppresses this death-promoting activity. The sequence is that of Bcl-2-interacting killer (Bik) from Mus musculus (Mouse).